The sequence spans 157 residues: Cyclic pyranopterin monophosphate synthase (157 aa).

Residues 73-75 (LCH) and 110-111 (ME) each bind substrate. Residue Asp-125 is part of the active site.

The protein belongs to the MoaC family. As to quaternary structure, homohexamer; trimer of dimers.

The catalysed reaction is (8S)-3',8-cyclo-7,8-dihydroguanosine 5'-triphosphate = cyclic pyranopterin phosphate + diphosphate. It functions in the pathway cofactor biosynthesis; molybdopterin biosynthesis. Catalyzes the conversion of (8S)-3',8-cyclo-7,8-dihydroguanosine 5'-triphosphate to cyclic pyranopterin monophosphate (cPMP). In Pseudomonas fluorescens (strain SBW25), this protein is Cyclic pyranopterin monophosphate synthase.